A 282-amino-acid polypeptide reads, in one-letter code: Acetylglutamate kinase (282 aa).

Substrate is bound by residues 62-63 (GG), arginine 84, and asparagine 178.

It belongs to the acetylglutamate kinase family. ArgB subfamily.

Its subcellular location is the cytoplasm. The catalysed reaction is N-acetyl-L-glutamate + ATP = N-acetyl-L-glutamyl 5-phosphate + ADP. Its pathway is amino-acid biosynthesis; L-arginine biosynthesis; N(2)-acetyl-L-ornithine from L-glutamate: step 2/4. Its function is as follows. Catalyzes the ATP-dependent phosphorylation of N-acetyl-L-glutamate. The sequence is that of Acetylglutamate kinase from Kosmotoga olearia (strain ATCC BAA-1733 / DSM 21960 / TBF 19.5.1).